The chain runs to 759 residues: Phosphoribosylformylglycinamidine synthase subunit PurL (759 aa).

Residue His-46 is part of the active site. ATP is bound by residues Tyr-49 and Lys-88. Glu-90 provides a ligand contact to Mg(2+). Residues Ser-91–His-94 and Arg-113 contribute to the substrate site. The active-site Proton acceptor is the His-92. Residue Asp-114 participates in Mg(2+) binding. A substrate-binding site is contributed by Gln-237. Residue Asp-265 coordinates Mg(2+). Glu-309 to Gln-311 provides a ligand contact to substrate. Residues Asp-498 and Gly-535 each contribute to the ATP site. Asn-536 is a binding site for Mg(2+). A substrate-binding site is contributed by Ser-538.

It belongs to the FGAMS family. As to quaternary structure, monomer. Part of the FGAM synthase complex composed of 1 PurL, 1 PurQ and 2 PurS subunits.

Its subcellular location is the cytoplasm. The catalysed reaction is N(2)-formyl-N(1)-(5-phospho-beta-D-ribosyl)glycinamide + L-glutamine + ATP + H2O = 2-formamido-N(1)-(5-O-phospho-beta-D-ribosyl)acetamidine + L-glutamate + ADP + phosphate + H(+). It participates in purine metabolism; IMP biosynthesis via de novo pathway; 5-amino-1-(5-phospho-D-ribosyl)imidazole from N(2)-formyl-N(1)-(5-phospho-D-ribosyl)glycinamide: step 1/2. In terms of biological role, part of the phosphoribosylformylglycinamidine synthase complex involved in the purines biosynthetic pathway. Catalyzes the ATP-dependent conversion of formylglycinamide ribonucleotide (FGAR) and glutamine to yield formylglycinamidine ribonucleotide (FGAM) and glutamate. The FGAM synthase complex is composed of three subunits. PurQ produces an ammonia molecule by converting glutamine to glutamate. PurL transfers the ammonia molecule to FGAR to form FGAM in an ATP-dependent manner. PurS interacts with PurQ and PurL and is thought to assist in the transfer of the ammonia molecule from PurQ to PurL. The sequence is that of Phosphoribosylformylglycinamidine synthase subunit PurL from Anaeromyxobacter sp. (strain K).